The sequence spans 287 residues: Diaminopimelate epimerase (287 aa).

Substrate is bound by residues Asn-13, Gln-46, and Asn-66. Cys-75 functions as the Proton donor in the catalytic mechanism. Substrate contacts are provided by residues 76–77 (GN), Asn-166, Asn-199, and 217–218 (ER). The active-site Proton acceptor is Cys-226. Substrate is bound at residue 227 to 228 (GT).

The protein belongs to the diaminopimelate epimerase family. In terms of assembly, homodimer.

Its subcellular location is the cytoplasm. It carries out the reaction (2S,6S)-2,6-diaminopimelate = meso-2,6-diaminopimelate. Its pathway is amino-acid biosynthesis; L-lysine biosynthesis via DAP pathway; DL-2,6-diaminopimelate from LL-2,6-diaminopimelate: step 1/1. Its function is as follows. Catalyzes the stereoinversion of LL-2,6-diaminopimelate (L,L-DAP) to meso-diaminopimelate (meso-DAP), a precursor of L-lysine and an essential component of the bacterial peptidoglycan. This Paraburkholderia xenovorans (strain LB400) protein is Diaminopimelate epimerase.